The primary structure comprises 175 residues: Protein GrpE (175 aa).

Belongs to the GrpE family. As to quaternary structure, homodimer.

The protein resides in the cytoplasm. Functionally, participates actively in the response to hyperosmotic and heat shock by preventing the aggregation of stress-denatured proteins, in association with DnaK and GrpE. It is the nucleotide exchange factor for DnaK and may function as a thermosensor. Unfolded proteins bind initially to DnaJ; upon interaction with the DnaJ-bound protein, DnaK hydrolyzes its bound ATP, resulting in the formation of a stable complex. GrpE releases ADP from DnaK; ATP binding to DnaK triggers the release of the substrate protein, thus completing the reaction cycle. Several rounds of ATP-dependent interactions between DnaJ, DnaK and GrpE are required for fully efficient folding. This chain is Protein GrpE, found in Thermoplasma acidophilum (strain ATCC 25905 / DSM 1728 / JCM 9062 / NBRC 15155 / AMRC-C165).